The following is a 228-amino-acid chain: Uracil-DNA glycosylase (228 aa).

Catalysis depends on Asp64, which acts as the Proton acceptor.

It belongs to the uracil-DNA glycosylase (UDG) superfamily. UNG family.

It localises to the cytoplasm. It catalyses the reaction Hydrolyzes single-stranded DNA or mismatched double-stranded DNA and polynucleotides, releasing free uracil.. Functionally, excises uracil residues from the DNA which can arise as a result of misincorporation of dUMP residues by DNA polymerase or due to deamination of cytosine. The sequence is that of Uracil-DNA glycosylase from Pectobacterium carotovorum subsp. carotovorum (strain PC1).